Consider the following 248-residue polypeptide: PF03932 family protein CutC (248 aa).

It belongs to the CutC family. As to quaternary structure, homodimer.

The protein resides in the cytoplasm. The chain is PF03932 family protein CutC from Escherichia coli O127:H6 (strain E2348/69 / EPEC).